Consider the following 185-residue polypeptide: Elongation factor P (185 aa).

This sequence belongs to the elongation factor P family.

It is found in the cytoplasm. It participates in protein biosynthesis; polypeptide chain elongation. Involved in peptide bond synthesis. Stimulates efficient translation and peptide-bond synthesis on native or reconstituted 70S ribosomes in vitro. Probably functions indirectly by altering the affinity of the ribosome for aminoacyl-tRNA, thus increasing their reactivity as acceptors for peptidyl transferase. This chain is Elongation factor P, found in Cyanothece sp. (strain PCC 7425 / ATCC 29141).